The primary structure comprises 565 residues: MKQEQVRMAVLLMLNCFVKATAPPPWPPSASSASFLDDLGDLGIAPLIRADEAGTARASADFGNLSVAGVGAPRLAAAAAVLYPSRPADIAALLRASCARPAPFAVSARGCGHSVHGQASAPDGVVVDMASLGRLQGGGARRLAVSVEGRYVDAGGEQLWVDVLRASMAHGLTPVSWTDYLHLTVGGTLSNAGISGQAFRHGPQISNVLELDVITGVGEMVTCSKEKAPDLFDAVLGGLGQFGVITRARIPLAPAPARARWVRFVYTTAAAMTADQERLIAVDRAGGAGAVGGLMDYVEGSVHLNQGLVETWRTQPQPPSPSSSSSSSFFSDADEARVAALAKEAGGVLYFLEGAIYFGGAAGPSAADVDKRMDVLRRELRHERGFVFAQDVAYAGFLDRVHDGELKLRAAGLWDVPHPWLNLFLPRSGVLAFADGVFHGILSRTPAMGPVLIYPMNRNKWDSNMSAVITDDDGDEVFYTVGILRSAAAAGDVGRLEEQNDEILGFCEVAGIAYKQYLPYYGSQAEWQKRHFGANLWPRFVQRKSKYDPKAILSRGQGIFTSPLA.

Residues 1-20 (MKQEQVRMAVLLMLNCFVKA) form the signal peptide. Asn-64 carries an N-linked (GlcNAc...) asparagine glycan. Residues 74–255 (RLAAAAAVLY…TRARIPLAPA (182 aa)) enclose the FAD-binding PCMH-type domain. Positions 108, 110, and 112 each coordinate FAD. Residue His-113 is modified to Pros-8alpha-FAD histidine. FAD contacts are provided by Ser-114, Gln-118, Asp-179, Thr-184, Ser-190, Ile-194, and Ile-245. Asn-464 is a glycosylation site (N-linked (GlcNAc...) asparagine). Positions 517, 554, and 557 each coordinate FAD.

Belongs to the oxygen-dependent FAD-linked oxidoreductase family. In terms of assembly, monomer. FAD is required as a cofactor. Post-translationally, glycosylated. In terms of tissue distribution, mostly expressed in leaves, culms, inflorescence meristems, and flowers, especially in vascular tissues.

The protein localises to the secreted. It localises to the extracellular space. The catalysed reaction is N(6)-dimethylallyladenine + A + H2O = 3-methyl-2-butenal + adenine + AH2. Catalyzes the oxidation of cytokinins, a family of N(6)-substituted adenine derivatives that are plant hormones, where the substituent is an isopentenyl group. Is a major QTL involved in grain yield. Modulates the number of reproductive organs by regulating the cytokinin accumulation in inflorescence meristems. Acts as negative regulator of panicle branching. The polypeptide is Cytokinin dehydrogenase 2 (Oryza sativa subsp. japonica (Rice)).